Reading from the N-terminus, the 93-residue chain is Putative septation protein SpoVG (93 aa).

Belongs to the SpoVG family.

Its function is as follows. Could be involved in septation. The polypeptide is Putative septation protein SpoVG (Lachnoclostridium phytofermentans (strain ATCC 700394 / DSM 18823 / ISDg) (Clostridium phytofermentans)).